The chain runs to 132 residues: Large ribosomal subunit protein uL24 (132 aa).

This sequence belongs to the universal ribosomal protein uL24 family. Part of the 50S ribosomal subunit.

In terms of biological role, one of two assembly initiator proteins, it binds directly to the 5'-end of the 23S rRNA, where it nucleates assembly of the 50S subunit. One of the proteins that surrounds the polypeptide exit tunnel on the outside of the subunit. The sequence is that of Large ribosomal subunit protein uL24 from Synechococcus sp. (strain JA-2-3B'a(2-13)) (Cyanobacteria bacterium Yellowstone B-Prime).